The chain runs to 443 residues: Probable glycine dehydrogenase (decarboxylating) subunit 1 (443 aa).

The protein belongs to the GcvP family. N-terminal subunit subfamily. As to quaternary structure, the glycine cleavage system is composed of four proteins: P, T, L and H. In this organism, the P 'protein' is a heterodimer of two subunits.

The enzyme catalyses N(6)-[(R)-lipoyl]-L-lysyl-[glycine-cleavage complex H protein] + glycine + H(+) = N(6)-[(R)-S(8)-aminomethyldihydrolipoyl]-L-lysyl-[glycine-cleavage complex H protein] + CO2. Its function is as follows. The glycine cleavage system catalyzes the degradation of glycine. The P protein binds the alpha-amino group of glycine through its pyridoxal phosphate cofactor; CO(2) is released and the remaining methylamine moiety is then transferred to the lipoamide cofactor of the H protein. The sequence is that of Probable glycine dehydrogenase (decarboxylating) subunit 1 from Chlorobium limicola (strain DSM 245 / NBRC 103803 / 6330).